A 171-amino-acid polypeptide reads, in one-letter code: S-ribosylhomocysteine lyase (171 aa).

Fe cation contacts are provided by His-54, His-58, and Cys-128.

Belongs to the LuxS family. Homodimer. Fe cation is required as a cofactor.

It carries out the reaction S-(5-deoxy-D-ribos-5-yl)-L-homocysteine = (S)-4,5-dihydroxypentane-2,3-dione + L-homocysteine. Its function is as follows. Involved in the synthesis of autoinducer 2 (AI-2) which is secreted by bacteria and is used to communicate both the cell density and the metabolic potential of the environment. The regulation of gene expression in response to changes in cell density is called quorum sensing. Catalyzes the transformation of S-ribosylhomocysteine (RHC) to homocysteine (HC) and 4,5-dihydroxy-2,3-pentadione (DPD). The protein is S-ribosylhomocysteine lyase of Aliarcobacter butzleri (strain RM4018) (Arcobacter butzleri).